A 592-amino-acid chain; its full sequence is MSRQSSVSFRSGGSRSFSTASAITPSVSRTSFTSVSRSGGGGGGGFGRVSLGGACGVGGYGSRSLYNLGGSKWISISTSGGSFRNRFGAGAGAGGGYGFGGGAGSGFGFGGGAGGGFGLGGGAGFGGGYGGPGFPVCPPGGIQEVTVNQSLLTPLNLQIDPSIQRVRTEEREQIKTLNNKFASFIDKVRFLEQQNKVLDTKWTLLQEQGTKTVRQNLEPLFEQYINNLRRQLDSIVGERGRLDSELRNMQDLVEDFKNKYEDEINKRTTAENEFVMLKKDVDAAYMNKVELEAKVDALMDEINFMKMFFDAELSQMQTHVSDTSVVLSMDNNRNLDLDSIIAEVKAQYEEIANRSRTEAESWYQTKYEELQQTAGRHGDDLRNTKHEISEMNRMIQRLRAEIDNVKKQCANLQNAIADAEQRGELALKDARNKLAELEEALQKAKQDMARLLREYQELMNTKLALDVEIATYRKLLEGEECRLSGEGVGPVNISVVTSSVSSGYGSGSGYGGGLGGGLGGGLGGSLAGGGSGSYYSSSSGGVGLGGGLSVGGSGFSASSGRGLGVGFGSGGGSSSSVKFVSTTSSSRKSFKS.

The segment covering 1–18 (MSRQSSVSFRSGGSRSFS) has biased composition (low complexity). Positions 1 to 20 (MSRQSSVSFRSGGSRSFSTA) are disordered. The head stretch occupies residues 1–169 (MSRQSSVSFR…DPSIQRVRTE (169 aa)). Phosphoserine occurs at positions 5, 8, 16, and 21. Thr24 is subject to Phosphothreonine; by CDK1. 7 positions are modified to phosphoserine: Ser26, Ser36, Ser50, Ser64, Ser71, Ser75, and Ser82. Phosphothreonine; by CDK1 is present on Thr153. Position 168 is a phosphothreonine; by AURKB (Thr168). The coil 1A stretch occupies residues 170–205 (EREQIKTLNNKFASFIDKVRFLEQQNKVLDTKWTLL). Positions 170-483 (EREQIKTLNN…KLLEGEECRL (314 aa)) constitute an IF rod domain. The segment at 206 to 224 (QEQGTKTVRQNLEPLFEQY) is linker 1. A coil 1B region spans residues 225 to 317 (INNLRRQLDS…FFDAELSQMQ (93 aa)). A linker 12 region spans residues 318-340 (THVSDTSVVLSMDNNRNLDLDSI). Residues 341-479 (IAEVKAQYEE…ATYRKLLEGE (139 aa)) are coil 2. The tract at residues 480-592 (ECRLSGEGVG…TSSSRKSFKS (113 aa)) is tail. A disordered region spans residues 568–592 (GSGGGSSSSVKFVSTTSSSRKSFKS). Over residues 574–592 (SSSVKFVSTTSSSRKSFKS) the composition is skewed to low complexity.

It belongs to the intermediate filament family. As to quaternary structure, heterodimer of a type I and a type II keratin. Heterodimer with type I keratin KRT25 leading to the formation of keratin intermediate filament (KIF) network. Forms a heterodimer (via 2B domains) with KRT14 (via 2B domains). Interacts with TCHP. Interacts with EPPK1. Interacts with AMELX. Interacts with PKP1 (via N-terminus) and PKP2. Phosphorylated by CDK1, AURKB and Rho-kinase, phosphorylation is regulated by the cell cycle. Thr-24 phosphorylation, mediated by CDK1, peaks during prometaphase or metaphase cells with phosphorylated filamentous structures evident throughout the cytoplasm during early mitosis. CDK1 phosphorylates Thr-24 in mitotic cells at the site of injury. Post-translationally, O-glycosylated.

It is found in the cytoplasm. Required for the formation of keratin intermediate filaments in the basal epidermis and maintenance of the skin barrier in response to mechanical stress. Regulates the recruitment of Langerhans cells to the epidermis, potentially by modulation of the abundance of macrophage chemotactic cytokines, macrophage inflammatory cytokines and CTNND1 localization in keratinocytes. The sequence is that of Keratin, type II cytoskeletal 5 (KRT5) from Pan troglodytes (Chimpanzee).